We begin with the raw amino-acid sequence, 184 residues long: Ribosome-recycling factor (184 aa).

The protein belongs to the RRF family.

The protein localises to the cytoplasm. In terms of biological role, responsible for the release of ribosomes from messenger RNA at the termination of protein biosynthesis. May increase the efficiency of translation by recycling ribosomes from one round of translation to another. This Natranaerobius thermophilus (strain ATCC BAA-1301 / DSM 18059 / JW/NM-WN-LF) protein is Ribosome-recycling factor.